A 238-amino-acid chain; its full sequence is Probable transcriptional regulatory protein SSP2054 (238 aa).

It belongs to the TACO1 family. YeeN subfamily.

Its subcellular location is the cytoplasm. The sequence is that of Probable transcriptional regulatory protein SSP2054 from Staphylococcus saprophyticus subsp. saprophyticus (strain ATCC 15305 / DSM 20229 / NCIMB 8711 / NCTC 7292 / S-41).